The chain runs to 289 residues: Phycobilisome 39 kDa linker polypeptide, phycocyanin-associated, rod (289 aa).

Residues 2-180 (PITSAASRLG…LYRGYANSDR (179 aa)) form the PBS-linker domain. The tract at residues 213–233 (SYLPSKQGTAPSRTFGRSSQG) is disordered. A compositionally biased stretch (polar residues) spans 216–233 (PSKQGTAPSRTFGRSSQG). The 53-residue stretch at 236–288 (PRLYRIEVTGISLPRYPKVRRSNKEFIVPYEQLSSTLQQINKLGGKVASITFA) folds into the CpcD-like domain.

It belongs to the phycobilisome linker protein family.

The protein resides in the cellular thylakoid membrane. In terms of biological role, rod linker protein, associated with phycocyanin. Linker polypeptides determine the state of aggregation and the location of the disk-shaped phycobiliprotein units within the phycobilisome and modulate their spectroscopic properties in order to mediate a directed and optimal energy transfer. In Microchaete diplosiphon (Fremyella diplosiphon), this protein is Phycobilisome 39 kDa linker polypeptide, phycocyanin-associated, rod (cpcI2).